A 136-amino-acid chain; its full sequence is DUF35 domain-containing scaffold protein (136 aa).

3 residues coordinate Zn(2+): C25, C38, and C41.

The protein belongs to the scaffold protein DUF35 family. As to quaternary structure, interacts with acetoacetyl-CoA thiolase and HMG-CoA synthase (HMGCS) that catalyzes the first and second step in the mevalonate pathway, respectively.

In terms of biological role, functions as a scaffold to connect the acetoacetyl-CoA thiolase and HMG-CoA synthase (HMGCS) dimers in the channeling thiolase/HMGCS complex, which allows for efficient coupling of the endergonic thiolase reaction with the exergonic HMGCS reaction. The chain is DUF35 domain-containing scaffold protein from Pyrococcus furiosus (strain ATCC 43587 / DSM 3638 / JCM 8422 / Vc1).